Consider the following 688-residue polypeptide: UvrABC system protein B (688 aa).

The Helicase ATP-binding domain maps to 41–429 (ANFEAGLAKQ…AGEVTELVVR (389 aa)). ATP is bound at residue 54-61 (GVTGSGKT). The Beta-hairpin signature appears at 107 to 130 (YYDYYQPEAYVPSSDTFIEKDSSI). The region spanning 446–612 (QVDDLMSEIH…SVERPISDIM (167 aa)) is the Helicase C-terminal domain. A disordered region spans residues 616–646 (REDAAEKKSGKGRSKSRQVAEETPDYRAMKP). Over residues 633–645 (QVAEETPDYRAMK) the composition is skewed to basic and acidic residues. One can recognise a UVR domain in the interval 650–685 (AGKLKSLEQKMYQHAKDLEFEAAAQIRDQIQKLKTA).

It belongs to the UvrB family. Forms a heterotetramer with UvrA during the search for lesions. Interacts with UvrC in an incision complex.

It is found in the cytoplasm. Its function is as follows. The UvrABC repair system catalyzes the recognition and processing of DNA lesions. A damage recognition complex composed of 2 UvrA and 2 UvrB subunits scans DNA for abnormalities. Upon binding of the UvrA(2)B(2) complex to a putative damaged site, the DNA wraps around one UvrB monomer. DNA wrap is dependent on ATP binding by UvrB and probably causes local melting of the DNA helix, facilitating insertion of UvrB beta-hairpin between the DNA strands. Then UvrB probes one DNA strand for the presence of a lesion. If a lesion is found the UvrA subunits dissociate and the UvrB-DNA preincision complex is formed. This complex is subsequently bound by UvrC and the second UvrB is released. If no lesion is found, the DNA wraps around the other UvrB subunit that will check the other stand for damage. The polypeptide is UvrABC system protein B (Xanthomonas oryzae pv. oryzae (strain KACC10331 / KXO85)).